Consider the following 482-residue polypeptide: MASIQALHQELITKERSAQEITEAALETIHQLEPKLHSFLAITADQALAQAKQVDAQLAAGEEIGLLAGIPIGIKDNMCTKGIATTCGSKILQNFIPPYESTVTQKLAAAGAVMVGKTNLDEFAMGSSTENSAYQVTGNPWDVSRVPGGSSGGSAAAVAADECVVSIGSDTGGSIRQPAALCGVVGLKPTYGLVSRFGLVAYASSLDQIGPFGRTVEDAAILLQEIAGYDPQDSTSLKVEIPDYSKSLIPDLKGKKVGVITETFGEGLDEVVEKVVRKAIDQLAELGAEVQEISCPRFRYGLPTYYVIAPSEASANLARYDGVKYGYRTDDPDDLMSMYTNTRAEGFGAEVKRRIMIGTYALSAGYYDAYYLKAQKVRTLIKEDFEKAFESVDVLVCPTTPTTAFKAGEKTADPLSMYLSDLMTIPVNLAGLPGLSLPCGFDDQGLPIGLQMIGNVLREDQVLQAAYAYEQSTEWHKASPKL.

Active-site charge relay system residues include K75 and S150. Catalysis depends on S174, which acts as the Acyl-ester intermediate.

Belongs to the amidase family. GatA subfamily. As to quaternary structure, heterotrimer of A, B and C subunits.

The enzyme catalyses L-glutamyl-tRNA(Gln) + L-glutamine + ATP + H2O = L-glutaminyl-tRNA(Gln) + L-glutamate + ADP + phosphate + H(+). In terms of biological role, allows the formation of correctly charged Gln-tRNA(Gln) through the transamidation of misacylated Glu-tRNA(Gln) in organisms which lack glutaminyl-tRNA synthetase. The reaction takes place in the presence of glutamine and ATP through an activated gamma-phospho-Glu-tRNA(Gln). The polypeptide is Glutamyl-tRNA(Gln) amidotransferase subunit A (Acaryochloris marina (strain MBIC 11017)).